Here is a 294-residue protein sequence, read N- to C-terminus: MKTKIIVIVGPTAVGKTALAIEVAKRFNGEVVSGDSQQVYRGLDIGTAKASPEEQAAVLHHLIDVREITESYSAFDFVSEAKMTIEDIHSRGKLAIIAGGTGLYIQSLLEGYHLGGETPHEEILAYRASLEPYSDEELAHLVEQAGLEIPQFNRRRAMRALEIAHFGQDLENQETLYEPLIICLDDERSQLYERINHRVDLMFEAGLLDEAKWLFDHSPNVQAAKGIGYKELFPYFRGEQTFEEASESLKQATRRFAKRQLTWFRNRMQVTFYQIGESGVQDRILSQIEEFLDD.

Position 10–17 (10–17 (GPTAVGKT)) interacts with ATP. Residue 12–17 (TAVGKT) participates in substrate binding. The tract at residues 35–38 (DSQQ) is interaction with substrate tRNA.

The protein belongs to the IPP transferase family. As to quaternary structure, monomer. Mg(2+) is required as a cofactor.

The catalysed reaction is adenosine(37) in tRNA + dimethylallyl diphosphate = N(6)-dimethylallyladenosine(37) in tRNA + diphosphate. In terms of biological role, catalyzes the transfer of a dimethylallyl group onto the adenine at position 37 in tRNAs that read codons beginning with uridine, leading to the formation of N6-(dimethylallyl)adenosine (i(6)A). This chain is tRNA dimethylallyltransferase, found in Streptococcus pneumoniae (strain Taiwan19F-14).